A 228-amino-acid chain; its full sequence is Ribonuclease 3 (228 aa).

In terms of domain architecture, RNase III spans leucine 2–glycine 130. Glutamate 43 contacts Mg(2+). Residue aspartate 47 is part of the active site. Mg(2+) contacts are provided by aspartate 116 and glutamate 119. Residue glutamate 119 is part of the active site. In terms of domain architecture, DRBM spans aspartate 157–isoleucine 226.

The protein belongs to the ribonuclease III family. As to quaternary structure, homodimer. Mg(2+) serves as cofactor.

It localises to the cytoplasm. It carries out the reaction Endonucleolytic cleavage to 5'-phosphomonoester.. Its function is as follows. Digests double-stranded RNA. Involved in the processing of primary rRNA transcript to yield the immediate precursors to the large and small rRNAs (23S and 16S). Processes some mRNAs, and tRNAs when they are encoded in the rRNA operon. Processes pre-crRNA and tracrRNA of type II CRISPR loci if present in the organism. The protein is Ribonuclease 3 of Caldanaerobacter subterraneus subsp. tengcongensis (strain DSM 15242 / JCM 11007 / NBRC 100824 / MB4) (Thermoanaerobacter tengcongensis).